The primary structure comprises 422 residues: Serine--tRNA ligase (422 aa).

231-233 is an L-serine binding site; the sequence is TAE. Position 261-263 (261-263) interacts with ATP; sequence RSE. An L-serine-binding site is contributed by E284. 348-351 serves as a coordination point for ATP; the sequence is EISS. S383 contributes to the L-serine binding site.

It belongs to the class-II aminoacyl-tRNA synthetase family. Type-1 seryl-tRNA synthetase subfamily. Homodimer. The tRNA molecule binds across the dimer.

The protein resides in the cytoplasm. The enzyme catalyses tRNA(Ser) + L-serine + ATP = L-seryl-tRNA(Ser) + AMP + diphosphate + H(+). The catalysed reaction is tRNA(Sec) + L-serine + ATP = L-seryl-tRNA(Sec) + AMP + diphosphate + H(+). It participates in aminoacyl-tRNA biosynthesis; selenocysteinyl-tRNA(Sec) biosynthesis; L-seryl-tRNA(Sec) from L-serine and tRNA(Sec): step 1/1. Its function is as follows. Catalyzes the attachment of serine to tRNA(Ser). Is also able to aminoacylate tRNA(Sec) with serine, to form the misacylated tRNA L-seryl-tRNA(Sec), which will be further converted into selenocysteinyl-tRNA(Sec). The polypeptide is Serine--tRNA ligase (Mycoplasmopsis agalactiae (strain NCTC 10123 / CIP 59.7 / PG2) (Mycoplasma agalactiae)).